We begin with the raw amino-acid sequence, 195 residues long: Probable cobalt-precorrin-6B C(15)-methyltransferase (decarboxylating) (195 aa).

S-adenosyl-L-methionine contacts are provided by residues T24, 48 to 52 (GCGTG), D72, and A101.

Belongs to the methyltransferase superfamily. Archaeal-type CbiT family.

It carries out the reaction Co-precorrin-6B + S-adenosyl-L-methionine = Co-precorrin-7 + S-adenosyl-L-homocysteine + CO2. The protein operates within cofactor biosynthesis; adenosylcobalamin biosynthesis; cob(II)yrinate a,c-diamide from sirohydrochlorin (anaerobic route): step 8/10. Catalyzes the methylation of C-15 in cobalt-precorrin-6B followed by the decarboxylation of C-12 to form cobalt-precorrin-7. The chain is Probable cobalt-precorrin-6B C(15)-methyltransferase (decarboxylating) from Pyrobaculum calidifontis (strain DSM 21063 / JCM 11548 / VA1).